Here is a 474-residue protein sequence, read N- to C-terminus: MTDGGLQADAPHLGVVVSVRGSVVDVRFDTHLPPIHTVLHADEGRIIVEVLAQRDAHHVRAIALTPTQGLARGMPVVDTGGPLKAPVGKGILSRMFDVFGNTIDRLPAPPDIQWRSVHRAPPALARRSTRSEVFVTGIKVIDVLLPLERGGKAGLFGGAGVGKTVLLTEMIHNMVGHQEGISIFCGIGERCREGEELYRDMKDAGVLPSMVMVFGQMNEPPGSRFRVGHAALTMAEYFRDDEHRDVLLLIDNIFRFIQAGSEVSGLMGQMPSRLGYQPTMGTELSGLEERIANTDSGAITSIQAVYVPADDFTDPAAVHTFSHLSASIVLSRKRASEGLFPAIDPLQSSSKMATPGIVGERHYALAQEIRRTLAQYAQLKDIIAMLGLEQLSPQDRNVVGRARRLERFLTQPFFTTEQFTNLPGKLVSLEDALDGCERILRDEFKDCPESALYMIGKIDEARARKTEAIDVHES.

157-164 (GGAGVGKT) contributes to the ATP binding site.

It belongs to the ATPase alpha/beta chains family. As to quaternary structure, F-type ATPases have 2 components, CF(1) - the catalytic core - and CF(0) - the membrane proton channel. CF(1) has five subunits: alpha(3), beta(3), gamma(1), delta(1), epsilon(1). CF(0) has three main subunits: a(1), b(2) and c(9-12). The alpha and beta chains form an alternating ring which encloses part of the gamma chain. CF(1) is attached to CF(0) by a central stalk formed by the gamma and epsilon chains, while a peripheral stalk is formed by the delta and b chains.

Its subcellular location is the cell inner membrane. It catalyses the reaction ATP + H2O + 4 H(+)(in) = ADP + phosphate + 5 H(+)(out). Functionally, produces ATP from ADP in the presence of a proton gradient across the membrane. The catalytic sites are hosted primarily by the beta subunits. In Polaromonas naphthalenivorans (strain CJ2), this protein is ATP synthase subunit beta 2.